We begin with the raw amino-acid sequence, 518 residues long: Probable cytosol aminopeptidase (518 aa).

Residues Lys270 and Asp275 each contribute to the Mn(2+) site. Lys282 is an active-site residue. Mn(2+)-binding residues include Asp293, Asp352, and Glu354. Arg356 is a catalytic residue. Residues 495-507 show a composition bias toward polar residues; that stretch reads SRTTRQPGSTGET. The interval 495–518 is disordered; it reads SRTTRQPGSTGETGSRKNRRKSKE.

The protein belongs to the peptidase M17 family. Mn(2+) serves as cofactor.

It localises to the cytoplasm. The catalysed reaction is Release of an N-terminal amino acid, Xaa-|-Yaa-, in which Xaa is preferably Leu, but may be other amino acids including Pro although not Arg or Lys, and Yaa may be Pro. Amino acid amides and methyl esters are also readily hydrolyzed, but rates on arylamides are exceedingly low.. It carries out the reaction Release of an N-terminal amino acid, preferentially leucine, but not glutamic or aspartic acids.. In terms of biological role, presumably involved in the processing and regular turnover of intracellular proteins. Catalyzes the removal of unsubstituted N-terminal amino acids from various peptides. The sequence is that of Probable cytosol aminopeptidase from Nitrosospira multiformis (strain ATCC 25196 / NCIMB 11849 / C 71).